A 455-amino-acid chain; its full sequence is Exodeoxyribonuclease 7 large subunit (455 aa).

Belongs to the XseA family. As to quaternary structure, heterooligomer composed of large and small subunits.

It localises to the cytoplasm. It carries out the reaction Exonucleolytic cleavage in either 5'- to 3'- or 3'- to 5'-direction to yield nucleoside 5'-phosphates.. Functionally, bidirectionally degrades single-stranded DNA into large acid-insoluble oligonucleotides, which are then degraded further into small acid-soluble oligonucleotides. This chain is Exodeoxyribonuclease 7 large subunit, found in Escherichia coli (strain SMS-3-5 / SECEC).